We begin with the raw amino-acid sequence, 358 residues long: Peptide chain release factor 1 (358 aa).

Gln233 carries the N5-methylglutamine modification.

The protein belongs to the prokaryotic/mitochondrial release factor family. Methylated by PrmC. Methylation increases the termination efficiency of RF1.

It is found in the cytoplasm. In terms of biological role, peptide chain release factor 1 directs the termination of translation in response to the peptide chain termination codons UAG and UAA. The sequence is that of Peptide chain release factor 1 from Staphylococcus haemolyticus (strain JCSC1435).